Here is a 1522-residue protein sequence, read N- to C-terminus: Adhesion G protein-coupled receptor B3 (1522 aa).

Positions 1-25 are cleaved as a signal peptide; that stretch reads MKAVRNLLIYIFSTYLLVMFGFNAA. Residues 26 to 880 lie on the Extracellular side of the membrane; it reads QDFWCSTLVK…MESSGTPSVT (855 aa). Residues 30 to 159 enclose the CUB domain; it reads CSTLVKGVIY…KSFFEFLVLN (130 aa). N51, N54, N82, N105, and N241 each carry an N-linked (GlcNAc...) asparagine glycan. TSP type-1 domains follow at residues 291–343, 345–398, 400–453, and 455–508; these read ESGV…ALCP, HGVW…ALCP, DGQW…PECT, and NGQW…QRCP. 14 disulfide bridges follow: C303/C336, C307/C342, C318/C326, C357/C392, C361/C397, C372/C382, C412/C447, C416/C452, C427/C437, C467/C502, C471/C507, C482/C492, C514/C549, and C537/C567. An N-linked (GlcNAc...) asparagine glycan is attached at N337. The N-linked (GlcNAc...) asparagine glycan is linked to N418. A glycan (N-linked (GlcNAc...) asparagine) is linked at N540. A Phosphoserine modification is found at S619. N625, N779, N812, and N828 each carry an N-linked (GlcNAc...) asparagine glycan. The region spanning 693 to 869 is the GAIN-B domain; that stretch reads QNSYLMTGNV…AILAQQPREI (177 aa). Intrachain disulfides connect C819/C851 and C839/C853. The interval 819 to 869 is GPS; that stretch reads CVLWDDSKSNESLGTWSTQGCKTVLTDASHTKCLCDRLSTFAILAQQPREI. A helical transmembrane segment spans residues 881 to 901; the sequence is LIVGSGLSCLALITLAVVYAA. Residues 902-910 are Cytoplasmic-facing; sequence LWRYIRSER. Residues 911 to 931 traverse the membrane as a helical segment; it reads SIILINFCLSIISSNILILVG. The Extracellular segment spans residues 932–939; sequence QTQTHNKS. Residue N937 is glycosylated (N-linked (GlcNAc...) asparagine). Residues 940-960 form a helical membrane-spanning segment; sequence ICTTTTAFLHFFFLASFCWVL. Topologically, residues 961–981 are cytoplasmic; sequence TEAWQSYMAVTGKIRTRLIRK. The helical transmembrane segment at 982-1002 threads the bilayer; sequence RFLCLGWGLPALVVATSVGFT. Residues 1003-1023 lie on the Extracellular side of the membrane; that stretch reads RTKGYGTDHYCWLSLEGGLLY. A helical transmembrane segment spans residues 1024–1044; that stretch reads AFVGPAAAVVLVNMVIGILVF. Topologically, residues 1045–1098 are cytoplasmic; it reads NKLVSRDGILDKKLKHRAGQMSEPHSGLTLKCAKCGVVSTTALSATTASNAMAS. Residues 1099–1119 traverse the membrane as a helical segment; sequence LWSSCVVLPLLALTWMSAVLA. At 1120–1125 the chain is on the extracellular side; sequence MTDKRS. A helical transmembrane segment spans residues 1126 to 1146; sequence ILFQILFAVFDSLQGFVIVMV. Residues 1147-1522 are Cytoplasmic-facing; the sequence is HCILRREVQD…VQEGDFQTEV (376 aa). Residues S1220 and S1411 each carry the phosphoserine modification.

It belongs to the G-protein coupled receptor 2 family. Adhesion G-protein coupled receptor (ADGR) subfamily. As to quaternary structure, forms a heterodimer, consisting of a large extracellular region non-covalently linked to a seven-transmembrane moiety. Interacts (via its TSRs) with C1QL1, C1QL2, C1QL3 and C1QL4. Interacts via (C-terminus) with ELMO1, ELMO2 and ELMO3. In terms of processing, the endogenous protein is proteolytically cleaved into 2 subunits, an extracellular subunit and a seven-transmembrane subunit. Brain-specific expression.

Its subcellular location is the cell membrane. Receptor that plays a role in the regulation of synaptogenesis and dendritic spine formation at least partly via interaction with ELMO1 and RAC1 activity. Promotes myoblast fusion through ELMO/DOCK1. In Mus musculus (Mouse), this protein is Adhesion G protein-coupled receptor B3 (Adgrb3).